The sequence spans 252 residues: Carboxymethylenebutenolidase (252 aa).

Residues Met1–Val28 are disordered. Active-site residues include Cys126, Asp183, and His214.

The protein belongs to the dienelactone hydrolase family.

It catalyses the reaction 2-(5-oxo-2,5-dihydrofuran-2-ylidene)acetate + H2O = 4-oxohex-2-enedioate + H(+). The protein operates within aromatic compound metabolism; 3-chlorocatechol degradation. Ring cleavage of cyclic ester dienelactone to produce maleylacetate. This chain is Carboxymethylenebutenolidase (clcD), found in Rhodococcus opacus (Nocardia opaca).